Consider the following 216-residue polypeptide: Hydrogenase-4 component E (216 aa).

Over 1 to 3 (MTG) the chain is Periplasmic. Residues 4–24 (SMIVNNLAGLMMLTSLFVISV) form a helical membrane-spanning segment. Residues 25–38 (KSYRLSCGFYACQS) are Cytoplasmic-facing. The next 2 helical transmembrane spans lie at 39–59 (LVLVSIFATLSCLFAAEQLLI) and 60–80 (WSASAFITKVLLVPLIMTYAA). Topologically, residues 81 to 92 (RNIPQNIPEKAL) are cytoplasmic. Residues 93-113 (FGPAMMALLAALIVLLCAFVV) traverse the membrane as a helical segment. Residues 114–122 (QPVKLPMAT) lie on the Periplasmic side of the membrane. The helical transmembrane segment at 123–143 (GLKPALAVALGHFLLGLLCIV) threads the bilayer. At 144 to 150 (SQRNILR) the chain is on the cytoplasmic side. The chain crosses the membrane as a helical span at residues 151–171 (QIFGYCLMENGSHLVLALLAW). Residues 172–175 (RAPE) are Periplasmic-facing. The chain crosses the membrane as a helical span at residues 176–196 (LVEIGIATDAIFAVIVMVLLA). At 197 to 216 (RKIWRTHGTLDVNNLTALKG) the chain is on the cytoplasmic side.

It is found in the cell inner membrane. This is Hydrogenase-4 component E (hyfE) from Escherichia coli O157:H7.